A 424-amino-acid chain; its full sequence is Serine--tRNA ligase (424 aa).

230 to 232 lines the L-serine pocket; the sequence is TAE. Position 261-263 (261-263) interacts with ATP; it reads RSE. Glu284 is an L-serine binding site. 348-351 is an ATP binding site; that stretch reads EISS. An L-serine-binding site is contributed by Ser384.

It belongs to the class-II aminoacyl-tRNA synthetase family. Type-1 seryl-tRNA synthetase subfamily. In terms of assembly, homodimer. The tRNA molecule binds across the dimer.

The protein resides in the cytoplasm. It carries out the reaction tRNA(Ser) + L-serine + ATP = L-seryl-tRNA(Ser) + AMP + diphosphate + H(+). The catalysed reaction is tRNA(Sec) + L-serine + ATP = L-seryl-tRNA(Sec) + AMP + diphosphate + H(+). Its pathway is aminoacyl-tRNA biosynthesis; selenocysteinyl-tRNA(Sec) biosynthesis; L-seryl-tRNA(Sec) from L-serine and tRNA(Sec): step 1/1. Catalyzes the attachment of serine to tRNA(Ser). Is also able to aminoacylate tRNA(Sec) with serine, to form the misacylated tRNA L-seryl-tRNA(Sec), which will be further converted into selenocysteinyl-tRNA(Sec). The chain is Serine--tRNA ligase from Streptococcus pneumoniae (strain ATCC 700669 / Spain 23F-1).